The chain runs to 505 residues: Maturase K (505 aa).

It belongs to the intron maturase 2 family. MatK subfamily.

Its subcellular location is the plastid. The protein resides in the chloroplast. Its function is as follows. Usually encoded in the trnK tRNA gene intron. Probably assists in splicing its own and other chloroplast group II introns. The protein is Maturase K of Calycanthus occidentalis (Spice bush).